Here is a 711-residue protein sequence, read N- to C-terminus: Serine/threonine-protein kinase ATG1b (711 aa).

In terms of domain architecture, Protein kinase spans 20–277 (YAVGRQIGSG…FEEFFHHPFL (258 aa)). Residues 26-34 (IGSGSFSVV) and K49 each bind ATP. Catalysis depends on D142, which acts as the Proton acceptor. 2 disordered regions span residues 318–342 (LPFF…TSPM) and 383–419 (FEGH…SMDQ). A compositionally biased stretch (basic and acidic residues) spans 383–393 (FEGHRLSDRSQ). A compositionally biased stretch (polar residues) spans 394 to 410 (FKPSSLPDSRSFSTQGR). Residues 421-424 (YVLI) carry the AIM (Atg8-family-interacting motif) motif.

The protein belongs to the protein kinase superfamily. Ser/Thr protein kinase family.

The protein resides in the cytoplasmic vesicle. The protein localises to the autophagosome. In terms of biological role, serine/threonine protein kinase involved in autophagy. The ATG1-ATG13 protein kinase complex regulates downstream events required for autophagosome enclosure and/or vacuolar delivery. The sequence is that of Serine/threonine-protein kinase ATG1b from Arabidopsis thaliana (Mouse-ear cress).